A 309-amino-acid chain; its full sequence is Eugenol synthase 2 (309 aa).

NADP(+) is bound by residues 13-16 (TGYI), 35-45 (VRETTVSDPVK), Arg-36, 86-88 (FMQ), 111-113 (SEF), Lys-134, and 154-156 (NCF). Lys-134 (proton donor/acceptor) is an active-site residue.

It belongs to the NmrA-type oxidoreductase family. In terms of tissue distribution, mostly expressed in petals, and, to a lower extent, in sepals, stamens and pistils.

It catalyses the reaction eugenol + a carboxylate + NADP(+) = a coniferyl ester + NADPH. The catalysed reaction is eugenol + acetate + NADP(+) = (E)-coniferyl acetate + NADPH. It participates in aromatic compound metabolism; phenylpropanoid biosynthesis. In terms of biological role, catalyzes the synthesis of the phenylpropene eugenol from coniferyl acetate. Phenylpropenes are produced by plants as defense compounds with antimicrobial and antianimal properties, or as floral attractants of pollinators. The polypeptide is Eugenol synthase 2 (Clarkia breweri (Fairy fans)).